We begin with the raw amino-acid sequence, 571 residues long: MRTSQFLLSTLKETPSDAVVISHQLMLRAGMIRKLASGLYTWLPMGLRVLRKVENVVREEMNAAGALEVLMPAIQPAELWQESGRWVQYGPELLRVKDRHEREFCVGPTHEEVITDLARNELNSYKQLPINMYQIQTKFRDEIRPRFGLMRGREFIMKDAYSFHADQASLQETYDRMHQAYCNVFSRLGLNFRPVQADTGSIGGTGSHEFHVLAESGEDDIAFSNVSDYAANIEKAEAVPREKERAAATEDMRLVDTPNTKTIDALVQGFGLAIEKTIKTLVVHAAEEGKLIALIVRGDHELNEIKAANLEQVASPLQMASEAEIRAAIGAGPGSLGPVNLPIPCIVDRSVALMSDFASGANIEDKHYFGVNWERDLPLPTVADLRNVVAGDPSPDGQGTLEIKRGIEVGHIFQLGTKYSEAMNCQVLGENGKPVTLTMGCYGIGVSRVVAAAIEQNHDERGILWNDALAPFHIALVPLRYETEQVREATDKLYAELTAAGYEVLLDDRDKKTSPGIKFADMELIGIPHRVVVSDRGLAEGNLEYKSRAETEAQAVPLAEILPFLQARISR.

This sequence belongs to the class-II aminoacyl-tRNA synthetase family. ProS type 1 subfamily. Homodimer.

The protein resides in the cytoplasm. It carries out the reaction tRNA(Pro) + L-proline + ATP = L-prolyl-tRNA(Pro) + AMP + diphosphate. Its function is as follows. Catalyzes the attachment of proline to tRNA(Pro) in a two-step reaction: proline is first activated by ATP to form Pro-AMP and then transferred to the acceptor end of tRNA(Pro). As ProRS can inadvertently accommodate and process non-cognate amino acids such as alanine and cysteine, to avoid such errors it has two additional distinct editing activities against alanine. One activity is designated as 'pretransfer' editing and involves the tRNA(Pro)-independent hydrolysis of activated Ala-AMP. The other activity is designated 'posttransfer' editing and involves deacylation of mischarged Ala-tRNA(Pro). The misacylated Cys-tRNA(Pro) is not edited by ProRS. This chain is Proline--tRNA ligase, found in Ectopseudomonas mendocina (strain ymp) (Pseudomonas mendocina).